Reading from the N-terminus, the 170-residue chain is Flavodoxin (170 aa).

One can recognise a Flavodoxin-like domain in the interval 4 to 165 (IGLFFGTQTG…RIQAWVAQLK (162 aa)).

Belongs to the flavodoxin family. FMN serves as cofactor.

Functionally, low-potential electron donor to a number of redox enzymes. The sequence is that of Flavodoxin (isiB) from Picosynechococcus sp. (strain ATCC 27264 / PCC 7002 / PR-6) (Agmenellum quadruplicatum).